The following is a 993-amino-acid chain: Protein translocase subunit SecA (993 aa).

ATP contacts are provided by residues Gln102, 120–124 (GEGKT), and Asp523. The interval 910–962 (ENAPEPQISGGNGQQPPQRRQQTSLDDLEKQFERKKKRELEQARMAGGGMPDA) is disordered. Positions 936–951 (DLEKQFERKKKRELEQ) are enriched in basic and acidic residues. Residues Cys979, Cys981, Cys990, and His991 each coordinate Zn(2+).

It belongs to the SecA family. In terms of assembly, monomer and homodimer. Part of the essential Sec protein translocation apparatus which comprises SecA, SecYEG and auxiliary proteins SecDF. Other proteins may also be involved. Requires Zn(2+) as cofactor.

The protein resides in the cell inner membrane. The protein localises to the cytoplasm. The enzyme catalyses ATP + H2O + cellular proteinSide 1 = ADP + phosphate + cellular proteinSide 2.. Its function is as follows. Part of the Sec protein translocase complex. Interacts with the SecYEG preprotein conducting channel. Has a central role in coupling the hydrolysis of ATP to the transfer of proteins into and across the cell membrane, serving as an ATP-driven molecular motor driving the stepwise translocation of polypeptide chains across the membrane. This is Protein translocase subunit SecA from Koribacter versatilis (strain Ellin345).